Consider the following 905-residue polypeptide: Phosphatidylethanolamine N-methyltransferase (905 aa).

Composition is skewed to polar residues over residues 1-22 and 40-58; these read MTNQ…STSV and DSNG…SSLN. The disordered stretch occupies residues 1 to 73; the sequence is MTNQIPSASS…SEPERYGCTP (73 aa). The Lumenal portion of the chain corresponds to 1 to 104; the sequence is MTNQIPSASS…DPRFSKTPWD (104 aa). A helical transmembrane segment spans residues 105–125; it reads WIVISSILAQVLLFFMTTGAV. At 126-128 the chain is on the cytoplasmic side; it reads RRY. A helical transmembrane segment spans residues 129 to 149; the sequence is SMMLCFFFWRISYDAGIGFLL. Residues 150–209 are Lumenal-facing; sequence HMQSNHRKVVTWISDFGFFDKENHPKLYDLTKKQLISKMDSSYNYDTSPLEFNSWLVFRH. Residues 210-230 traverse the membrane as a helical segment; that stretch reads FVDLILMCDFCSYILMGLAWT. Over 231–236 the chain is Cytoplasmic; sequence CWPKVN. Residues 237–257 traverse the membrane as a helical segment; the sequence is IILQFLRIFGGIALIVFNYWV. Residues 258–268 are Lumenal-facing; that stretch reads KMDAHRVVRDY. A helical membrane pass occupies residues 269–289; it reads AWYWGDFFFLLRSSLVFNGVF. Topologically, residues 290–313 are cytoplasmic; the sequence is ELAPHPMYSVGYAGYYGMSLLTGS. The helical transmembrane segment at 314–334 threads the bilayer; the sequence is YAVLFASILAHAAQFGFLLFV. Topologically, residues 335 to 379 are lumenal; sequence ENPHIERTYGTDINHARLSPRGEDNEFELPPEHDLVGFVNFDFTR. Position 353 is a phosphoserine (S353). A helical transmembrane segment spans residues 380-400; it reads ISDVALLIIALYSIFIILLSS. The Cytoplasmic segment spans residues 401–408; that stretch reads NSHYSQFW. A helical transmembrane segment spans residues 409–429; it reads AIFQAFVWRFLHSIIHAFILF. Topologically, residues 430 to 456 are lumenal; the sequence is YQSKSKAWTKHFIRNGESAAYAWSQWK. A helical membrane pass occupies residues 457-479; the sequence is GLYNLTLNMSYISFVMAAWKLYH. Residues 480-493 are Cytoplasmic-facing; the sequence is LPSNWTYGLVSLRH. The helical transmembrane segment at 494–514 threads the bilayer; that stretch reads ALGFGLIALHIYTSVSIYEDL. Residues 515–552 lie on the Lumenal side of the membrane; sequence GQYGWFYGDFFLPSRSPKLVYQGIYRYVNNPERFLGCS. A helical transmembrane segment spans residues 553 to 573; sequence AYWGLALISSSAWIFLIAILA. Over 574-905 the chain is Cytoplasmic; the sequence is QLSNLAIIRL…FDGPSGAKDD (332 aa).

The protein belongs to the class VI-like SAM-binding methyltransferase superfamily. CHO2 family.

The protein localises to the endoplasmic reticulum membrane. The catalysed reaction is a 1,2-diacyl-sn-glycero-3-phosphoethanolamine + S-adenosyl-L-methionine = a 1,2-diacyl-sn-glycero-3-phospho-N-methylethanolamine + S-adenosyl-L-homocysteine + H(+). It functions in the pathway phospholipid metabolism; phosphatidylcholine biosynthesis. In terms of biological role, catalyzes the first step of the methylation pathway of phosphatidylcholine biosynthesis, the SAM-dependent methylation of phosphatidylethanolamine (PE) to phosphatidylmonomethylethanolamine (PMME). This chain is Phosphatidylethanolamine N-methyltransferase, found in Schizosaccharomyces pombe (strain 972 / ATCC 24843) (Fission yeast).